The following is a 789-amino-acid chain: Phenylalanine--tRNA ligase beta subunit (789 aa).

Positions 39-149 (ADGLEAFRIA…HEAPVGQSYV (111 aa)) constitute a tRNA-binding domain. Residues 399–471 (SAVPVISYDP…RIEGLDNVPS (73 aa)) enclose the B5 domain. The Mg(2+) site is built by Asp-449, Asp-455, and Asp-459. The FDX-ACB domain maps to 696–788 (SMLQPVFRDF…AAAKKGARLR (93 aa)).

The protein belongs to the phenylalanyl-tRNA synthetase beta subunit family. Type 1 subfamily. As to quaternary structure, tetramer of two alpha and two beta subunits. It depends on Mg(2+) as a cofactor.

It is found in the cytoplasm. It catalyses the reaction tRNA(Phe) + L-phenylalanine + ATP = L-phenylalanyl-tRNA(Phe) + AMP + diphosphate + H(+). This Zymomonas mobilis subsp. mobilis (strain ATCC 31821 / ZM4 / CP4) protein is Phenylalanine--tRNA ligase beta subunit.